Reading from the N-terminus, the 466-residue chain is Adenosylhomocysteinase (466 aa).

Substrate is bound by residues Thr57, Asp132, and Glu192. An NAD(+)-binding site is contributed by 193-195; that stretch reads TTT. Positions 222 and 226 each coordinate substrate. NAD(+)-binding positions include Asn227, 256-261, Glu279, Asn314, 335-337, and Asn380; these read GYGDVG and IGH.

This sequence belongs to the adenosylhomocysteinase family. It depends on NAD(+) as a cofactor.

It is found in the cytoplasm. The catalysed reaction is S-adenosyl-L-homocysteine + H2O = L-homocysteine + adenosine. It participates in amino-acid biosynthesis; L-homocysteine biosynthesis; L-homocysteine from S-adenosyl-L-homocysteine: step 1/1. Its function is as follows. May play a key role in the regulation of the intracellular concentration of adenosylhomocysteine. The sequence is that of Adenosylhomocysteinase from Mesorhizobium japonicum (strain LMG 29417 / CECT 9101 / MAFF 303099) (Mesorhizobium loti (strain MAFF 303099)).